Reading from the N-terminus, the 108-residue chain is Cell cycle protein GpsB (108 aa).

A coiled-coil region spans residues 32 to 69 (LDNVIKDYENFNAQIEALKAENEALKKAKFQARNTVSA).

The protein belongs to the GpsB family. Forms polymers through the coiled coil domains. Interacts with PBP1, MreC and EzrA.

It is found in the cytoplasm. Divisome component that associates with the complex late in its assembly, after the Z-ring is formed, and is dependent on DivIC and PBP2B for its recruitment to the divisome. Together with EzrA, is a key component of the system that regulates PBP1 localization during cell cycle progression. Its main role could be the removal of PBP1 from the cell pole after pole maturation is completed. Also contributes to the recruitment of PBP1 to the division complex. Not essential for septum formation. The protein is Cell cycle protein GpsB of Streptococcus pyogenes serotype M28 (strain MGAS6180).